Here is a 94-residue protein sequence, read N- to C-terminus: Protein S100-A1 (94 aa).

EF-hand domains are found at residues 13-48 (INVF…FLDA) and 50-85 (KDVD…LTVA). Residues Lys-28, Glu-33, Asp-63, Asn-65, Asp-67, Glu-69, and Glu-74 each contribute to the Ca(2+) site. An S-nitrosocysteine modification is found at Cys-86.

Belongs to the S-100 family. Dimer of either two alpha chains, or two beta chains, or one alpha and one beta chain. Also forms heterodimers with S100P. Interacts with AGER. Interacts with CAPZA1. Interacts with FKBP4. Interacts with RYR1 and RYR2. Interacts with CACYBP in a calcium-dependent manner. Interacts with PPP5C (via TPR repeats); the interaction is calcium-dependent and modulates PPP5C activity. Interacts with ATP2A2 and PLN in a Ca(2+)-dependent manner. Interacts with mitochondrial F1-ATPase subunits ATP5F1A and ATP5F1B; these interactions increase F1-ATPase activity. In terms of processing, glutathionylated; glutathionylation increases affinity to calcium about 10-fold. In terms of tissue distribution, highly prevalent in heart. Also found in lesser quantities in skeletal muscle and brain.

It is found in the cytoplasm. It localises to the sarcoplasmic reticulum. The protein localises to the mitochondrion. Functionally, small calcium binding protein that plays important roles in several biological processes such as Ca(2+) homeostasis, chondrocyte biology and cardiomyocyte regulation. In response to an increase in intracellular Ca(2+) levels, binds calcium which triggers conformational changes. These changes allow interactions with specific target proteins and modulate their activity. Regulates a network in cardiomyocytes controlling sarcoplasmic reticulum Ca(2+) cycling and mitochondrial function through interaction with the ryanodine receptors RYR1 and RYR2, sarcoplasmic reticulum Ca(2+)-ATPase/ATP2A2 and mitochondrial F1-ATPase. Facilitates diastolic Ca(2+) dissociation and myofilament mechanics in order to improve relaxation during diastole. In Homo sapiens (Human), this protein is Protein S100-A1 (S100A1).